Here is a 451-residue protein sequence, read N- to C-terminus: Signal transduction histidine-protein kinase ArlS (451 aa).

The next 2 helical transmembrane spans lie at 11–31 (IIVT…IIIF) and 156–176 (IIAL…SYVF). The HAMP domain occupies 178–231 (TQITKPLVSLSNKMIEIRRDGFQNKLQLNTNYEEIDNLANTFNEMMSQIEESFN). One can recognise a Histidine kinase domain in the interval 239–451 (DASHELRTPL…NKGTTFKIIF (213 aa)). H242 bears the Phosphohistidine; by autocatalysis mark.

In terms of processing, autophosphorylated.

It is found in the cell membrane. The enzyme catalyses ATP + protein L-histidine = ADP + protein N-phospho-L-histidine.. Functionally, member of the two-component regulatory system ArlS/ArlR involved in the regulation of adhesion, autolysis, multidrug resistance and virulence. ArlS probably functions as a sensor protein kinase which is autophosphorylated at a histidine residue and transfers its phosphate group to ArlR. The chain is Signal transduction histidine-protein kinase ArlS (arlS) from Staphylococcus aureus (strain USA300).